Reading from the N-terminus, the 934-residue chain is 2-oxoglutarate dehydrogenase E1 component (934 aa).

A compositionally biased stretch (basic and acidic residues) spans 515-537 (RAAQDKIDKSDKMDNPDMERPES). Residues 515–544 (RAAQDKIDKSDKMDNPDMERPESLQEPLQS) are disordered.

The protein belongs to the alpha-ketoglutarate dehydrogenase family. In terms of assembly, homodimer. Part of the 2-oxoglutarate dehydrogenase (OGDH) complex composed of E1 (2-oxoglutarate dehydrogenase), E2 (dihydrolipoamide succinyltransferase) and E3 (dihydrolipoamide dehydrogenase); the complex contains multiple copies of the three enzymatic components (E1, E2 and E3). Thiamine diphosphate is required as a cofactor.

The enzyme catalyses N(6)-[(R)-lipoyl]-L-lysyl-[protein] + 2-oxoglutarate + H(+) = N(6)-[(R)-S(8)-succinyldihydrolipoyl]-L-lysyl-[protein] + CO2. Functionally, E1 component of the 2-oxoglutarate dehydrogenase (OGDH) complex which catalyzes the decarboxylation of 2-oxoglutarate, the first step in the conversion of 2-oxoglutarate to succinyl-CoA and CO(2). In Staphylococcus haemolyticus (strain JCSC1435), this protein is 2-oxoglutarate dehydrogenase E1 component.